A 252-amino-acid polypeptide reads, in one-letter code: 5'-nucleotidase SurE (252 aa).

A divalent metal cation contacts are provided by Asp-8, Asp-9, Ser-39, and Asn-91.

It belongs to the SurE nucleotidase family. The cofactor is a divalent metal cation.

The protein localises to the cytoplasm. It carries out the reaction a ribonucleoside 5'-phosphate + H2O = a ribonucleoside + phosphate. Functionally, nucleotidase that shows phosphatase activity on nucleoside 5'-monophosphates. The sequence is that of 5'-nucleotidase SurE from Bordetella avium (strain 197N).